Consider the following 571-residue polypeptide: RNA polymerase sigma factor SigA (571 aa).

Positions 321–391 are sigma-70 factor domain-2; the sequence is MVESNLRLVI…TRAIADQART (71 aa). An Interaction with polymerase core subunit RpoC motif is present at residues 345–348; sequence DLIQ. Positions 400–476 are sigma-70 factor domain-3; that stretch reads ETINKVLRGA…DTAVESPAEA (77 aa). The segment at 489-542 is sigma-70 factor domain-4; that stretch reads VLKTLTDRERFVLIHRFGLLDGRPKTLEEVGSAFNVTRERIRQIEAKALRKMRH. Positions 515 to 534 form a DNA-binding region, H-T-H motif; that stretch reads LEEVGSAFNVTRERIRQIEA.

The protein belongs to the sigma-70 factor family. RpoD/SigA subfamily. As to quaternary structure, interacts transiently with the RNA polymerase catalytic core.

The protein localises to the cytoplasm. Its function is as follows. Sigma factors are initiation factors that promote the attachment of RNA polymerase to specific initiation sites and are then released. This sigma factor is the primary sigma factor during exponential growth. The polypeptide is RNA polymerase sigma factor SigA (Chlamydia muridarum (strain MoPn / Nigg)).